The sequence spans 417 residues: MLKRDMNIADYDADLWQAMEQEKVRQEEHIELIASENYTSPRVMQAQGSQLTNKYAEGYPGKRYYGGCEHVDIVEQLAIERAKELFGADYANVQPHSGSQANFAVYTALLQPGDTILGMNLAHGGHLTHGSPVNLSGKLYNVIPYGIDETGKIDYNELAELAKEHQPKMIVGGFSAYSGICDWEKMREIADSIGAYLFVDMAHVAGLVAADVYPNPVPHAHIVTTTTHKTLAGPRGGLILAKGGDEDLYKKLNSGVFPGSQGGPLMHVIAGKAVAFKEAMEPEFKTYQQQVAKNAKAMVEVFLARGYNVVSGGTHNHLFLLDLVDKNLTGKEADAALGRANITVNKNSVPNDPKSPFVTSGIRIGSPAVTRRGFKEAEVRELAGWISDILDNITDEGVSERVKKQVLDICARFPVYA.

Residues leucine 121 and glycine 125–leucine 127 each bind (6S)-5,6,7,8-tetrahydrofolate. An N6-(pyridoxal phosphate)lysine modification is found at lysine 229. A (6S)-5,6,7,8-tetrahydrofolate-binding site is contributed by serine 355–phenylalanine 357.

Belongs to the SHMT family. As to quaternary structure, homodimer. It depends on pyridoxal 5'-phosphate as a cofactor.

The protein localises to the cytoplasm. The catalysed reaction is (6R)-5,10-methylene-5,6,7,8-tetrahydrofolate + glycine + H2O = (6S)-5,6,7,8-tetrahydrofolate + L-serine. It functions in the pathway one-carbon metabolism; tetrahydrofolate interconversion. It participates in amino-acid biosynthesis; glycine biosynthesis; glycine from L-serine: step 1/1. Catalyzes the reversible interconversion of serine and glycine with tetrahydrofolate (THF) serving as the one-carbon carrier. This reaction serves as the major source of one-carbon groups required for the biosynthesis of purines, thymidylate, methionine, and other important biomolecules. Also exhibits THF-independent aldolase activity toward beta-hydroxyamino acids, producing glycine and aldehydes, via a retro-aldol mechanism. This chain is Serine hydroxymethyltransferase, found in Erwinia tasmaniensis (strain DSM 17950 / CFBP 7177 / CIP 109463 / NCPPB 4357 / Et1/99).